The following is a 113-amino-acid chain: Large ribosomal subunit protein uL22 (113 aa).

The protein belongs to the universal ribosomal protein uL22 family. As to quaternary structure, part of the 50S ribosomal subunit.

Its function is as follows. This protein binds specifically to 23S rRNA; its binding is stimulated by other ribosomal proteins, e.g. L4, L17, and L20. It is important during the early stages of 50S assembly. It makes multiple contacts with different domains of the 23S rRNA in the assembled 50S subunit and ribosome. The globular domain of the protein is located near the polypeptide exit tunnel on the outside of the subunit, while an extended beta-hairpin is found that lines the wall of the exit tunnel in the center of the 70S ribosome. The protein is Large ribosomal subunit protein uL22 of Xanthomonas oryzae pv. oryzae (strain MAFF 311018).